The following is an 85-amino-acid chain: MAHKKAGGSSRNGRDSESKRLGVKRFGGQVVRAGNIIVRQRGTHFHPGDNVGCGRDYTLFALTEGRVEFKVKGPAGRKYVSVIPA.

The tract at residues 1-23 is disordered; the sequence is MAHKKAGGSSRNGRDSESKRLGV.

It belongs to the bacterial ribosomal protein bL27 family.

The chain is Large ribosomal subunit protein bL27 from Methylococcus capsulatus (strain ATCC 33009 / NCIMB 11132 / Bath).